Reading from the N-terminus, the 468-residue chain is 3-isopropylmalate dehydratase large subunit (468 aa).

Residues 53 to 74 form a disordered region; that stretch reads QPSKTVATMDHNVPTDSRDLAG. Residues C347, C407, and C410 each coordinate [4Fe-4S] cluster.

Belongs to the aconitase/IPM isomerase family. LeuC type 1 subfamily. Heterodimer of LeuC and LeuD. Requires [4Fe-4S] cluster as cofactor.

It carries out the reaction (2R,3S)-3-isopropylmalate = (2S)-2-isopropylmalate. It participates in amino-acid biosynthesis; L-leucine biosynthesis; L-leucine from 3-methyl-2-oxobutanoate: step 2/4. Functionally, catalyzes the isomerization between 2-isopropylmalate and 3-isopropylmalate, via the formation of 2-isopropylmaleate. This chain is 3-isopropylmalate dehydratase large subunit, found in Pasteurella multocida (strain Pm70).